The chain runs to 250 residues: DNA repair protein RecO (250 aa).

This sequence belongs to the RecO family.

Its function is as follows. Involved in DNA repair and RecF pathway recombination. The protein is DNA repair protein RecO of Syntrophomonas wolfei subsp. wolfei (strain DSM 2245B / Goettingen).